The chain runs to 158 residues: Cyclic pyranopterin monophosphate synthase (158 aa).

Substrate is bound by residues 75 to 77 (LCH) and 113 to 114 (ME). Asp-128 is a catalytic residue.

This sequence belongs to the MoaC family. Homohexamer; trimer of dimers.

It carries out the reaction (8S)-3',8-cyclo-7,8-dihydroguanosine 5'-triphosphate = cyclic pyranopterin phosphate + diphosphate. The protein operates within cofactor biosynthesis; molybdopterin biosynthesis. In terms of biological role, catalyzes the conversion of (8S)-3',8-cyclo-7,8-dihydroguanosine 5'-triphosphate to cyclic pyranopterin monophosphate (cPMP). This chain is Cyclic pyranopterin monophosphate synthase, found in Vibrio campbellii (strain ATCC BAA-1116).